Here is a 252-residue protein sequence, read N- to C-terminus: Imidazole glycerol phosphate synthase subunit HisF (252 aa).

Active-site residues include Asp11 and Asp130.

It belongs to the HisA/HisF family. As to quaternary structure, heterodimer of HisH and HisF.

It localises to the cytoplasm. The catalysed reaction is 5-[(5-phospho-1-deoxy-D-ribulos-1-ylimino)methylamino]-1-(5-phospho-beta-D-ribosyl)imidazole-4-carboxamide + L-glutamine = D-erythro-1-(imidazol-4-yl)glycerol 3-phosphate + 5-amino-1-(5-phospho-beta-D-ribosyl)imidazole-4-carboxamide + L-glutamate + H(+). It participates in amino-acid biosynthesis; L-histidine biosynthesis; L-histidine from 5-phospho-alpha-D-ribose 1-diphosphate: step 5/9. Its function is as follows. IGPS catalyzes the conversion of PRFAR and glutamine to IGP, AICAR and glutamate. The HisF subunit catalyzes the cyclization activity that produces IGP and AICAR from PRFAR using the ammonia provided by the HisH subunit. The sequence is that of Imidazole glycerol phosphate synthase subunit HisF from Staphylococcus aureus (strain bovine RF122 / ET3-1).